The chain runs to 595 residues: DNA mismatch repair protein MutL (595 aa).

The protein belongs to the DNA mismatch repair MutL/HexB family.

Its function is as follows. This protein is involved in the repair of mismatches in DNA. It is required for dam-dependent methyl-directed DNA mismatch repair. May act as a 'molecular matchmaker', a protein that promotes the formation of a stable complex between two or more DNA-binding proteins in an ATP-dependent manner without itself being part of a final effector complex. In Rhodopseudomonas palustris (strain TIE-1), this protein is DNA mismatch repair protein MutL.